The sequence spans 396 residues: MPFLDKVKQQYEDWTRITPSNLLYDRALLLLFFVLLLIGLLAVSSASIPVGTRLFKDPFYFAKRDAIYVFLSCVTCYLCVQVPMEKWEQWHVRLFAFAIFLLILVLIPGIGLSVNGARRWIPMVLFNFQPAEFAKLALTCFLASYFTRKYDEVRSRKLSAFKPFALMGLMGLFLLSQPDLGSTVVLFVITFGLLFIVGANFWQFVGLMAFGGLLFVWLVLSSAYRLKRFTGFLDPFKDPYGTGFQLSNSLMAFGRGEWVGEGLGNSIQKLEYLPEAHTDFVMAVVGEEFGFLGILVIVILLGLLIFRAMKIGRESLLLEQRFKGFFAFGISFWIFFQGFVNLGMSLGLLPTKGLTFPLISYGGSSLIIMSMTIGLLLRIDHENRLMRIGQARLRDD.

Over 1–27 (MPFLDKVKQQYEDWTRITPSNLLYDRA) the chain is Cytoplasmic. Residues 28–48 (LLLLFFVLLLIGLLAVSSASI) traverse the membrane as a helical segment. Residues 49-64 (PVGTRLFKDPFYFAKR) lie on the Periplasmic side of the membrane. The chain crosses the membrane as a helical span at residues 65–85 (DAIYVFLSCVTCYLCVQVPME). Topologically, residues 86–93 (KWEQWHVR) are cytoplasmic. A helical membrane pass occupies residues 94–114 (LFAFAIFLLILVLIPGIGLSV). Topologically, residues 115–122 (NGARRWIP) are periplasmic. Residues 123–143 (MVLFNFQPAEFAKLALTCFLA) traverse the membrane as a helical segment. Topologically, residues 144–157 (SYFTRKYDEVRSRK) are cytoplasmic. Residues 158–178 (LSAFKPFALMGLMGLFLLSQP) form a helical membrane-spanning segment. Over 179 to 183 (DLGST) the chain is Periplasmic. 2 helical membrane passes run 184 to 204 (VVLF…FWQF) and 205 to 225 (VGLM…SAYR). Residues 226-285 (LKRFTGFLDPFKDPYGTGFQLSNSLMAFGRGEWVGEGLGNSIQKLEYLPEAHTDFVMAVV) are Periplasmic-facing. Residues 286 to 306 (GEEFGFLGILVIVILLGLLIF) traverse the membrane as a helical segment. The Cytoplasmic segment spans residues 307–323 (RAMKIGRESLLLEQRFK). A helical transmembrane segment spans residues 324-344 (GFFAFGISFWIFFQGFVNLGM). Residues 345 to 355 (SLGLLPTKGLT) are Periplasmic-facing. Residues 356–376 (FPLISYGGSSLIIMSMTIGLL) traverse the membrane as a helical segment. The Cytoplasmic segment spans residues 377 to 396 (LRIDHENRLMRIGQARLRDD).

This sequence belongs to the SEDS family. FtsW subfamily.

The protein resides in the cell inner membrane. The catalysed reaction is [GlcNAc-(1-&gt;4)-Mur2Ac(oyl-L-Ala-gamma-D-Glu-L-Lys-D-Ala-D-Ala)](n)-di-trans,octa-cis-undecaprenyl diphosphate + beta-D-GlcNAc-(1-&gt;4)-Mur2Ac(oyl-L-Ala-gamma-D-Glu-L-Lys-D-Ala-D-Ala)-di-trans,octa-cis-undecaprenyl diphosphate = [GlcNAc-(1-&gt;4)-Mur2Ac(oyl-L-Ala-gamma-D-Glu-L-Lys-D-Ala-D-Ala)](n+1)-di-trans,octa-cis-undecaprenyl diphosphate + di-trans,octa-cis-undecaprenyl diphosphate + H(+). The protein operates within cell wall biogenesis; peptidoglycan biosynthesis. Its function is as follows. Peptidoglycan polymerase that is essential for cell division. The protein is Probable peptidoglycan glycosyltransferase FtsW of Pasteurella multocida (strain Pm70).